We begin with the raw amino-acid sequence, 786 residues long: Endonuclease MutS2 (786 aa).

335–342 (GPNTGGKT) lines the ATP pocket. In terms of domain architecture, Smr spans 711 to 786 (LDLRGERFEN…GLGVTVVELK (76 aa)).

This sequence belongs to the DNA mismatch repair MutS family. MutS2 subfamily. As to quaternary structure, homodimer. Binds to stalled ribosomes, contacting rRNA.

In terms of biological role, endonuclease that is involved in the suppression of homologous recombination and thus may have a key role in the control of bacterial genetic diversity. Its function is as follows. Acts as a ribosome collision sensor, splitting the ribosome into its 2 subunits. Detects stalled/collided 70S ribosomes which it binds and splits by an ATP-hydrolysis driven conformational change. Acts upstream of the ribosome quality control system (RQC), a ribosome-associated complex that mediates the extraction of incompletely synthesized nascent chains from stalled ribosomes and their subsequent degradation. Probably generates substrates for RQC. The polypeptide is Endonuclease MutS2 (Bacillus cytotoxicus (strain DSM 22905 / CIP 110041 / 391-98 / NVH 391-98)).